The sequence spans 748 residues: Disintegrin and metalloproteinase domain-containing protein 10 (748 aa).

An N-terminal signal peptide occupies residues 1–19 (MVLLRVLILLLSWAAGMGG). A propeptide spanning residues 20–213 (QYGNPLNKYI…NGPELLRKKR (194 aa)) is cleaved from the precursor. Topologically, residues 20 to 672 (QYGNPLNKYI…SPELYENIAE (653 aa)) are extracellular. The short motif at 171 to 178 (GGCADHSV) is the Cysteine switch element. A Zn(2+)-binding site is contributed by Cys-173. The Peptidase M12B domain occupies 220 to 456 (NTCQLYIQTD…KRNNCFVESG (237 aa)). 17 cysteine pairs are disulfide-bonded: Cys-222/Cys-313, Cys-344/Cys-451, Cys-399/Cys-435, Cys-460/Cys-495, Cys-471/Cys-484, Cys-473/Cys-479, Cys-483/Cys-515, Cys-503/Cys-511, Cys-510/Cys-536, Cys-524/Cys-543, Cys-530/Cys-562, Cys-555/Cys-567, Cys-572/Cys-598, Cys-580/Cys-607, Cys-582/Cys-597, Cys-594/Cys-639, and Cys-632/Cys-645. N-linked (GlcNAc...) asparagine glycosylation is found at Asn-267 and Asn-278. Position 383 (His-383) interacts with Zn(2+). Glu-384 is a catalytic residue. The Zn(2+) site is built by His-387 and His-393. Asn-439 carries N-linked (GlcNAc...) asparagine glycosylation. The Disintegrin domain occupies 457–551 (QPICGNGMVE…LCPASDPKPN (95 aa)). N-linked (GlcNAc...) asparagine glycosylation occurs at Asn-551. Residues 673 to 693 (WIVAHWWAVLLMGIALIMLMA) form a helical membrane-spanning segment. The Cytoplasmic portion of the chain corresponds to 694–748 (GFIKICSVHTPSSNPKLPPPKPLPGTLKRRRPPQPIQQPQRQRPRESYQMGHMRR). Positions 704 to 748 (PSSNPKLPPPKPLPGTLKRRRPPQPIQQPQRQRPRESYQMGHMRR) are disordered. The short motif at 708-715 (PKLPPPKP) is the SH3-binding element. Residue Thr-719 is modified to Phosphothreonine; by FAM20C. Residues 722–728 (RRRPPQP) carry the SH3-binding motif. Residues 734-748 (RQRPRESYQMGHMRR) are interaction with AP2A1, AP2A2 and AP2M1.

As to quaternary structure, forms a ternary EFNA5-EPHA3-ADAM10 complex mediating EFNA5 extracellular domain shedding by ADAM10 which regulates the EFNA5-EPHA3 complex internalization and function, the cleavage occurs in trans, with ADAM10 and its substrate being on the membranes of opposing cells. Interacts with the clathrin adapter AP2 complex subunits AP2A1, AP2A2, AP2B1, and AP2M1; this interaction facilitates ADAM10 endocytosis from the plasma membrane during long-term potentiation in hippocampal neurons. Forms a ternary complex composed of ADAM10, EPHA4 and CADH1; within the complex, ADAM10 cleaves CADH1 which disrupts adherens junctions. Interacts with EPHA2. Interacts with NGF in a divalent cation-dependent manner. Interacts with TSPAN14; the interaction promotes ADAM10 maturation and cell surface expression. Interacts with TSPAN5, TSPAN10, TSPAN14, TSPAN15, TSPAN17 and TSPAN33; these interactions regulate ADAM10 substrate specificity, endocytosis and turnover. Interacts (via extracellular domain) with TSPAN33 (via extracellular domain) and (via cytoplasmic domain) with AFDN; interaction with TSPAN33 allows the docking of ADAM10 to zonula adherens through a PDZ11-dependent interaction between TSPAN33 and PLEKHA7 while interaction with AFDN locks ADAM10 at zonula adherens. Interacts with DLG1; this interaction recruits ADAM10 to the cell membrane during long-term depression in hippocampal neurons. Interacts (via extracellular domain) with BACE1 (via extracellular domain). Interacts with FAM171A1. In terms of assembly, (Microbial infection) Interacts with S.aureus hly; this interaction is necessary for toxin pore formation, disruption of focal adhesions and S.aureus hly-mediated cytotoxicity. Zn(2+) serves as cofactor. The precursor is cleaved by furin and PCSK7. In terms of tissue distribution, expressed in the brain (at protein level). Expressed in spleen, lymph node, thymus, peripheral blood leukocyte, bone marrow, cartilage, chondrocytes and fetal liver.

It localises to the cell membrane. It is found in the golgi apparatus membrane. The protein localises to the cytoplasmic vesicle. Its subcellular location is the clathrin-coated vesicle. The protein resides in the cell projection. It localises to the axon. It is found in the dendrite. The protein localises to the cell junction. Its subcellular location is the adherens junction. The protein resides in the cytoplasm. The catalysed reaction is Endopeptidase of broad specificity.. Catalytically inactive when the propeptide is intact and associated with the mature enzyme. The disintegrin and cysteine-rich regions modulate access of substrates to exerts an inhibitory effect on the cleavage of ADAM10 substrates. In terms of biological role, transmembrane metalloprotease which mediates the ectodomain shedding of a myriad of transmembrane proteins, including adhesion proteins, growth factor precursors and cytokines being essential for development and tissue homeostasis. Associates with six members of the tetraspanin superfamily TspanC8 which regulate its exit from the endoplasmic reticulum and its substrate selectivity. Cleaves the membrane-bound precursor of TNF-alpha at '76-Ala-|-Val-77' to its mature soluble form. Responsible for the proteolytical release of soluble JAM3 from endothelial cells surface. Responsible for the proteolytic release of several other cell-surface proteins, including heparin-binding epidermal growth-like factor, ephrin-A2, CD44, CDH2 and for constitutive and regulated alpha-secretase cleavage of amyloid precursor protein (APP). Contributes to the normal cleavage of the cellular prion protein. Involved in the cleavage of the adhesion molecule L1 at the cell surface and in released membrane vesicles, suggesting a vesicle-based protease activity. Also controls the proteolytic processing of Notch and mediates lateral inhibition during neurogenesis. Required for the development of type 1 transitional B cells into marginal zone B cells, probably by cleaving Notch. Responsible for the FasL ectodomain shedding and for the generation of the remnant ADAM10-processed FasL (FasL APL) transmembrane form. Also cleaves the ectodomain of the integral membrane proteins CORIN and ITM2B. Mediates the proteolytic cleavage of LAG3, leading to release the secreted form of LAG3. Mediates the proteolytic cleavage of IL6R and IL11RA, leading to the release of secreted forms of IL6R and IL11RA. Enhances the cleavage of CHL1 by BACE1. Cleaves NRCAM. Cleaves TREM2, resulting in shedding of the TREM2 ectodomain. Involved in the development and maturation of glomerular and coronary vasculature. During development of the cochlear organ of Corti, promotes pillar cell separation by forming a ternary complex with CADH1 and EPHA4 and cleaving CADH1 at adherens junctions. May regulate the EFNA5-EPHA3 signaling. Regulates leukocyte transmigration as a sheddase for the adherens junction protein VE-cadherin/CDH5 in endothelial cells. Functionally, (Microbial infection) Promotes the cytotoxic activity of S.aureus hly by binding to the toxin at zonula adherens and promoting formation of toxin pores. The sequence is that of Disintegrin and metalloproteinase domain-containing protein 10 from Homo sapiens (Human).